The primary structure comprises 324 residues: Beta-ketoacyl-[acyl-carrier-protein] synthase III (324 aa).

Active-site residues include Cys113 and His251. The segment at 252 to 256 is ACP-binding; the sequence is QANKR. Asn281 is a catalytic residue.

Belongs to the thiolase-like superfamily. FabH family. Homodimer.

Its subcellular location is the cytoplasm. The catalysed reaction is malonyl-[ACP] + acetyl-CoA + H(+) = 3-oxobutanoyl-[ACP] + CO2 + CoA. Its pathway is lipid metabolism; fatty acid biosynthesis. Catalyzes the condensation reaction of fatty acid synthesis by the addition to an acyl acceptor of two carbons from malonyl-ACP. Catalyzes the first condensation reaction which initiates fatty acid synthesis and may therefore play a role in governing the total rate of fatty acid production. Possesses both acetoacetyl-ACP synthase and acetyl transacylase activities. Its substrate specificity determines the biosynthesis of branched-chain and/or straight-chain of fatty acids. The protein is Beta-ketoacyl-[acyl-carrier-protein] synthase III of Bartonella tribocorum (strain CIP 105476 / IBS 506).